Consider the following 212-residue polypeptide: NADH dehydrogenase [ubiquinone] iron-sulfur protein 8, mitochondrial (212 aa).

The N-terminal 34 residues, 1 to 34 (MYRLSSSMLPRALAQAMRTGHLNGQSLHSSAVAA), are a transit peptide targeting the mitochondrion. 4Fe-4S ferredoxin-type domains follow at residues 104–133 (RRYP…IEAE) and 143–172 (TRYD…EGPN). [4Fe-4S] cluster is bound by residues C113, C116, C119, C123, C152, C155, C158, and C162.

Belongs to the complex I 23 kDa subunit family. As to quaternary structure, complex I is composed of 45 different subunits. This is a component of the iron-sulfur (IP) fragment of the enzyme. Interacts with RAB5IF. [4Fe-4S] cluster serves as cofactor.

The protein localises to the mitochondrion inner membrane. The enzyme catalyses a ubiquinone + NADH + 5 H(+)(in) = a ubiquinol + NAD(+) + 4 H(+)(out). Core subunit of the mitochondrial membrane respiratory chain NADH dehydrogenase (Complex I) which catalyzes electron transfer from NADH through the respiratory chain, using ubiquinone as an electron acceptor. Essential for the catalytic activity and assembly of complex I. The polypeptide is NADH dehydrogenase [ubiquinone] iron-sulfur protein 8, mitochondrial (Ndufs8) (Mus musculus (Mouse)).